The sequence spans 234 residues: L-cystine transport system permease protein TcyB (234 aa).

A run of 5 helical transmembrane segments spans residues 8–28 (ALTL…WPIL), 36–56 (IPLT…TALA), 78–98 (TPLL…NVTL), 100–120 (PFPS…SEII), and 199–219 (ILVI…LLSL). In terms of domain architecture, ABC transmembrane type-1 spans 32–221 (IYYTIPLTIL…IICFLLSLVQ (190 aa)).

The protein belongs to the binding-protein-dependent transport system permease family. In terms of assembly, the complex is composed of two ATP-binding proteins (TcyC), two transmembrane proteins (TcyB) and a solute-binding protein (TcyA).

Its subcellular location is the cell membrane. In terms of biological role, part of the ABC transporter complex TcyABC involved in L-cystine import. Probably responsible for the translocation of the substrate across the membrane. This Bacillus subtilis (strain 168) protein is L-cystine transport system permease protein TcyB (tcyB).